The sequence spans 242 residues: UDP-2,3-diacylglucosamine hydrolase (242 aa).

Mn(2+)-binding residues include Asp8, His10, Asp41, Asn79, and His114. Residue 79–80 participates in substrate binding; that stretch reads NR. Residues Asp122, Lys164, Lys167, and His195 each coordinate substrate. Positions 195 and 197 each coordinate Mn(2+).

The protein belongs to the LpxH family. Requires Mn(2+) as cofactor.

The protein localises to the cell inner membrane. It catalyses the reaction UDP-2-N,3-O-bis[(3R)-3-hydroxytetradecanoyl]-alpha-D-glucosamine + H2O = 2-N,3-O-bis[(3R)-3-hydroxytetradecanoyl]-alpha-D-glucosaminyl 1-phosphate + UMP + 2 H(+). It functions in the pathway glycolipid biosynthesis; lipid IV(A) biosynthesis; lipid IV(A) from (3R)-3-hydroxytetradecanoyl-[acyl-carrier-protein] and UDP-N-acetyl-alpha-D-glucosamine: step 4/6. Hydrolyzes the pyrophosphate bond of UDP-2,3-diacylglucosamine to yield 2,3-diacylglucosamine 1-phosphate (lipid X) and UMP by catalyzing the attack of water at the alpha-P atom. Involved in the biosynthesis of lipid A, a phosphorylated glycolipid that anchors the lipopolysaccharide to the outer membrane of the cell. The protein is UDP-2,3-diacylglucosamine hydrolase of Vibrio parahaemolyticus serotype O3:K6 (strain RIMD 2210633).